Reading from the N-terminus, the 448-residue chain is MEVALAVGAEASRVSRRILQKIWDPEPINDRDSNEPVWCLGRSYKLAPETPSPVTTATSPVDGAIDAAPAPIATPGTTNRQAIDTPPDSLASSFDSSLAYDNRNQDSGWPPAFLDDFGSRIWMTYRTGFEPIPRSTDPKAASALSFTMRLKTSFGDQTGFSSDTGWGCMIRSGQSLLANALLISQLGRDWRRTTDPGAERNIVALFADDARAPYSLQNFVKHGAIACGKHPGEWFGPSATARCIQALADQHESSLRIYSTGDLPDVYEDSFLATARPDGETFHPTLILVCTRLGIDKINPVYEEALISTLQMEQSIGIAGGRPSSSHYFVGVQRQWLFYLDPHHPRPALQYRENPLNYTLEELDSCHTRRLRYLHVEDMDPSMLIGFLIQDEDDWDMWKSAVKHVQGKSIINVSRHDPARGMGGARAEAIDEVETLSDDDDVDTVLEQ.

Over residues 69–78 the composition is skewed to low complexity; it reads PAPIATPGTT. The disordered stretch occupies residues 69–90; the sequence is PAPIATPGTTNRQAIDTPPDSL. Catalysis depends on Cys-168, which acts as the Nucleophile. Residues Asp-341 and His-343 contribute to the active site.

It belongs to the peptidase C54 family.

Its subcellular location is the cytoplasm. The protein resides in the nucleus. It localises to the preautophagosomal structure. It carries out the reaction [protein]-C-terminal L-amino acid-glycyl-phosphatidylethanolamide + H2O = [protein]-C-terminal L-amino acid-glycine + a 1,2-diacyl-sn-glycero-3-phosphoethanolamine. Functionally, cysteine protease that plays a key role in cytoplasm to vacuole transport (Cvt) and autophagy by mediating both proteolytic activation and delipidation of ATG8. Required for selective autophagic degradation of the nucleus (nucleophagy) as well as for mitophagy which contributes to regulate mitochondrial quantity and quality by eliminating the mitochondria to a basal level to fulfill cellular energy requirements and preventing excess ROS production. The protease activity is required for proteolytic activation of ATG8: cleaves the C-terminal amino acid of ATG8 to reveal a C-terminal glycine. ATG8 ubiquitin-like activity requires the exposure of the glycine at the C-terminus for its conjugation to phosphatidylethanolamine (PE) and its insertion to membranes, which is necessary for autophagy. The ATG8-PE conjugate mediates tethering between adjacent membranes and stimulates membrane hemifusion, leading to expansion of the autophagosomal membrane during autophagy. In addition to the protease activity, also catalyzes deconjugation of PE-conjugated forms of ATG8 during macroautophagy: ATG8 delipidation is required to release the protein from membranes, which facilitates multiple events during macroautophagy, and especially for efficient autophagosome biogenesis, the assembly of ATG9-containing tubulovesicular clusters into phagophores/autophagosomes, and for the disassembly of PAS-associated ATG components. ATG8 delipidation by ATG4 also recycles ATG8-PE generated on inappropriate membranes to maintain a reservoir of unlipidated ATG8 that is required for autophagosome formation at the PAS. This chain is Probable cysteine protease ATG4 (ATG4), found in Chaetomium globosum (strain ATCC 6205 / CBS 148.51 / DSM 1962 / NBRC 6347 / NRRL 1970) (Soil fungus).